A 464-amino-acid polypeptide reads, in one-letter code: Keratin, type I cytoskeletal 28 (464 aa).

The segment at 1 to 85 (MSLQFSNGSR…GSEGGLLSGN (85 aa)) is head. A coil 1A region spans residues 86 to 121 (EKVTMQNLNDRLASYLDNVRALEEANAELERKIKGW). In terms of domain architecture, IF rod spans 86–401 (EKVTMQNLND…RLIDGDGNSC (316 aa)). Residues 122-143 (YEKYGPGSCRGLDHDYSRYHLT) are linker 1. Residues 144–235 (IEDLKNKIIS…KNHEEEMKAL (92 aa)) are coil 1B. Residues 236-258 (QCAAGGNVNVEMNAAPGVDLAVL) form a linker 12 region. The segment at 259–397 (LNNMRAEYEA…ETYCRLIDGD (139 aa)) is coil 2. The tract at residues 398–464 (GNSCSKSKGF…NGKTEQRVPF (67 aa)) is tail. The tract at residues 443–464 (IHSIEEKTSKMTNGKTEQRVPF) is disordered.

It belongs to the intermediate filament family. Heterotetramer of two type I and two type II keratins. Strongly expressed in skin and scalp, and weak expression observed in thymus. In the hair follicle, expressed in Henle layer, Huxley layer and in the irs cuticle. Expression extends from the bulb region up to the point of differentiation into the three layers. Also present in the medulla of beard hair (at protein level).

The protein resides in the cytoplasm. Essential for the proper assembly of types I and II keratin protein complexes and the formation of keratin intermediate filaments in the inner root sheath (irs). In Homo sapiens (Human), this protein is Keratin, type I cytoskeletal 28.